Consider the following 414-residue polypeptide: Eukaryotic initiation factor 4A-1 (414 aa).

Residues 41–69 (ESFDDMGLQENLLRGIYAYGFEKPSAIQQ) carry the Q motif motif. Positions 72–242 (IVPFCKGLDV…RKFMNKPVRI (171 aa)) constitute a Helicase ATP-binding domain. 85 to 92 (AQSGTGKT) is a binding site for ATP. The DEAD box signature appears at 190–193 (DEAD). The Helicase C-terminal domain occupies 253-414 (GIKQFYVNVE…ELPANVADLL (162 aa)).

Belongs to the DEAD box helicase family. eIF4A subfamily. As to quaternary structure, eIF4F is a multi-subunit complex, the composition of which varies with external and internal environmental conditions. It is composed of at least EIF4A, EIF4E and EIF4G.

It catalyses the reaction ATP + H2O = ADP + phosphate + H(+). In terms of biological role, ATP-dependent RNA helicase which is a subunit of the eIF4F complex involved in cap recognition and is required for mRNA binding to ribosome. In the current model of translation initiation, eIF4A unwinds RNA secondary structures in the 5'-UTR of mRNAs which is necessary to allow efficient binding of the small ribosomal subunit, and subsequent scanning for the initiator codon. The polypeptide is Eukaryotic initiation factor 4A-1 (Oryza sativa subsp. japonica (Rice)).